Consider the following 368-residue polypeptide: Probable auxin efflux carrier component 5b (368 aa).

Transmembrane regions (helical) follow at residues 7 to 27 (VYKVVAAMAPLYFALGLGYGS), 39 to 59 (CDAVNRLVACFAVPFFAFDFA), 71 to 91 (VLAADALSKLAVALALAACAA), 114 to 134 (CITGFSLATLNNTLVVGVPLL), 145 to 165 (LIVQISVVQTIVYFPLLLLAF), 227 to 247 (VLGVAWACVTNRWHVETPSII), 251 to 271 (VLIMSKTGVGLSMFSMGLFMA), 286 to 306 (LGMALRFVAGPAATAVGAFAL), 312 to 332 (LLRLAIIQAALPQSITTFVFA), and 347 to 367 (IFGTLASLPVLIVYYIVLGFI).

The protein belongs to the auxin efflux carrier (TC 2.A.69.1) family. In terms of tissue distribution, expressed at low levels in roots and shoot apex.

The protein resides in the membrane. Functionally, may act as a component of the auxin efflux carrier. The sequence is that of Probable auxin efflux carrier component 5b from Oryza sativa subsp. japonica (Rice).